The sequence spans 148 residues: uncharacterized protein (148 aa).

The N-acetyltransferase domain maps to 1–144 (MNIKRITTEA…PHVLMTKEIS (144 aa)).

This is an uncharacterized protein from Bacillus subtilis (strain 168).